We begin with the raw amino-acid sequence, 509 residues long: Sensor histidine kinase TrcS (509 aa).

2 helical membrane-spanning segments follow: residues 24–44 and 188–208; these read LLLG…VVSV and VALV…VVGY. An HAMP domain is found at 207–269; the sequence is GYALRPLRRV…LLDNVDGALA (63 aa). The 219-residue stretch at 284–502 folds into the Histidine kinase domain; it reads DASHELRTPL…VFRVRLPMIE (219 aa). Residue H287 is modified to Phosphohistidine; by autocatalysis.

A divalent metal cation is required as a cofactor. Post-translationally, autophosphorylated.

The protein resides in the cell membrane. The enzyme catalyses ATP + protein L-histidine = ADP + protein N-phospho-L-histidine.. Member of the two-component regulatory system TrcS/TrcR. Phosphorylates TrcR. The TrcR-TrcS regulatory system may act as a transition regulatory system involved in adapting to an intracellular environment and transitioning from latency to reactivation. This Mycobacterium tuberculosis (strain ATCC 25618 / H37Rv) protein is Sensor histidine kinase TrcS.